We begin with the raw amino-acid sequence, 296 residues long: Acetyl-coenzyme A carboxylase carboxyl transferase subunit beta (296 aa).

A CoA carboxyltransferase N-terminal domain is found at 25–294 (VWTKCTACEQ…PFVEPELISE (270 aa)). Zn(2+) is bound by residues cysteine 29, cysteine 32, cysteine 48, and cysteine 51. A C4-type zinc finger spans residues 29–51 (CTACEQVLYSEELKRNLYVCPKC).

It belongs to the AccD/PCCB family. Acetyl-CoA carboxylase is a heterohexamer composed of biotin carboxyl carrier protein (AccB), biotin carboxylase (AccC) and two subunits each of ACCase subunit alpha (AccA) and ACCase subunit beta (AccD). It depends on Zn(2+) as a cofactor.

The protein localises to the cytoplasm. The catalysed reaction is N(6)-carboxybiotinyl-L-lysyl-[protein] + acetyl-CoA = N(6)-biotinyl-L-lysyl-[protein] + malonyl-CoA. Its pathway is lipid metabolism; malonyl-CoA biosynthesis; malonyl-CoA from acetyl-CoA: step 1/1. Component of the acetyl coenzyme A carboxylase (ACC) complex. Biotin carboxylase (BC) catalyzes the carboxylation of biotin on its carrier protein (BCCP) and then the CO(2) group is transferred by the transcarboxylase to acetyl-CoA to form malonyl-CoA. The sequence is that of Acetyl-coenzyme A carboxylase carboxyl transferase subunit beta from Haemophilus influenzae (strain 86-028NP).